The chain runs to 422 residues: GTPase Obg (422 aa).

Residues 1 to 158 (MFYDRARIFV…RWLDLELKLL (158 aa)) form the Obg domain. The region spanning 159 to 329 (ADVGLVGFPN…LVYRVSALLE (171 aa)) is the OBG-type G domain. GTP contacts are provided by residues 165–172 (GFPNAGKS), 190–194 (FTTIT), 212–215 (DIPG), 282–285 (NKMD), and 310–312 (SAV). Residues Ser-172 and Thr-192 each coordinate Mg(2+). The OCT domain occupies 337–422 (VPEALERPVI…IGDYEFEYVE (86 aa)).

Belongs to the TRAFAC class OBG-HflX-like GTPase superfamily. OBG GTPase family. In terms of assembly, monomer. Mg(2+) is required as a cofactor.

The protein resides in the cytoplasm. An essential GTPase which binds GTP, GDP and possibly (p)ppGpp with moderate affinity, with high nucleotide exchange rates and a fairly low GTP hydrolysis rate. Plays a role in control of the cell cycle, stress response, ribosome biogenesis and in those bacteria that undergo differentiation, in morphogenesis control. This is GTPase Obg from Pelotomaculum thermopropionicum (strain DSM 13744 / JCM 10971 / SI).